A 934-amino-acid polypeptide reads, in one-letter code: Complement component C6 (934 aa).

A signal peptide spans 1–21 (MTRHLTLCFILLVMLIDKSEA). 11 disulfide bridges follow: cysteine 22–cysteine 61, cysteine 24–cysteine 65, cysteine 35–cysteine 73, cysteine 39–cysteine 78, cysteine 82–cysteine 117, cysteine 93–cysteine 127, cysteine 96–cysteine 133, cysteine 140–cysteine 151, cysteine 146–cysteine 164, cysteine 158–cysteine 173, and cysteine 180–cysteine 218. TSP type-1 domains lie at 22-79 (CFCD…QTCP) and 81-134 (NCVL…KLCK). An LDL-receptor class A domain is found at 138-175 (TNCKNKFLCDSGRCIPSKLECNGENDCGDNSDERNCGR). Positions 156, 159, 161, 163, 169, and 170 each coordinate Ca(2+). An MACPF domain is found at 176-522 (TKPVCTRIYT…EYAAKFDPCQ (347 aa)). The beta stranded transmembrane segment at 278-290 (FFPIPIFHFSEKN) threads the bilayer. Asparagine 324 carries N-linked (GlcNAc...) asparagine glycosylation. Disulfide bonds link cysteine 399–cysteine 420, cysteine 499–cysteine 623, cysteine 521–cysteine 570, cysteine 523–cysteine 539, cysteine 526–cysteine 541, cysteine 543–cysteine 552, cysteine 577–cysteine 611, cysteine 589–cysteine 601, cysteine 644–cysteine 686, cysteine 672–cysteine 699, cysteine 704–cysteine 746, cysteine 732–cysteine 761, cysteine 773–cysteine 823, cysteine 784–cysteine 801, cysteine 786–cysteine 837, and cysteine 793–cysteine 816. The chain crosses the membrane as a beta stranded span at residues 402–415 (YETKKLKFLYMEIH). An EGF-like domain is found at 523–553 (CAPCPNNGRPRLSGTECLCVCQSGTYGENCE). The TSP type-1 3 domain maps to 565–612 (DGNWGCWSSWSACNAAYRRSRTRECNNPAPQRGGQSCGGKDQQEEDCT). 2 CCP regions span residues 611–688 (CTVS…RCLP) and 689–765 (DRTW…EQAI). Sushi domains are found at residues 642–701 (SGCS…ECQR) and 702–763 (TSCL…TCEQ). The segment at 642–934 (SGCSQPPLPE…EILNPGRCPD (293 aa)) is C5b-binding domain. Residues 766–840 (LTKSKDLCPP…FVHSGSCQEG (75 aa)) form a factor I module (FIM) 1 region. A Kazal-like 1 domain is found at 785–839 (ICMSPEEDCSAYSEDLCIFDGGSSQYFTSSACKFLAGKCLNNTQSHFVHSGSCQE). Residues asparagine 825, asparagine 855, and asparagine 872 are each glycosylated (N-linked (GlcNAc...) asparagine). The segment at 858–934 (KRVSCGYNTC…EILNPGRCPD (77 aa)) is factor I module (FIM) 2. 5 disulfide bridges follow: cysteine 862/cysteine 873, cysteine 867/cysteine 919, cysteine 880/cysteine 897, cysteine 882/cysteine 932, and cysteine 888/cysteine 912. The region spanning 876-934 (HTSNCVCLLPPQCSKDENQLYCVKIGSSMREKTVNICTLGAVRCANIKVEILNPGRCPD) is the Kazal-like 2 domain.

The protein belongs to the complement C6/C7/C8/C9 family. As to quaternary structure, component of the membrane attack complex (MAC), composed of complement C5b, C6, C7, C8A, C8B, C8G and multiple copies of the pore-forming subunit C9. Post-translationally, all cysteine residues are assumed to be cross-linked to one another. Individual modules containing an even number of conserved cysteine residues are supposed to have disulfide linkages only within the same module.

It localises to the secreted. It is found in the target cell membrane. Its activity is regulated as follows. Membrane attack complex (MAC) assembly is inhibited by CD59, thereby protecting self-cells from damage during complement activation. MAC assembly is also inhibited by clusterin (CLU) chaperones that inhibit polymerization of C9. Its function is as follows. Component of the membrane attack complex (MAC), a multiprotein complex activated by the complement cascade, which inserts into a target cell membrane and forms a pore, leading to target cell membrane rupture and cell lysis. The MAC is initiated by proteolytic cleavage of C5 into complement C5b in response to the classical, alternative, lectin and GZMK complement pathways. The complement pathways consist in a cascade of proteins that leads to phagocytosis and breakdown of pathogens and signaling that strengthens the adaptive immune system. Together with component C5b, involved in MAC complex assembly: complement C5b and C6 associate with the outer leaflet of target cell membrane, reducing the energy for membrane bending. This chain is Complement component C6, found in Mus musculus (Mouse).